The following is a 202-amino-acid chain: Large ribosomal subunit protein uL13 (202 aa).

It belongs to the universal ribosomal protein uL13 family.

The polypeptide is Large ribosomal subunit protein uL13 (Caenorhabditis elegans).